The sequence spans 424 residues: Serine hydroxymethyltransferase (424 aa).

(6S)-5,6,7,8-tetrahydrofolate contacts are provided by residues Leu-118 and 122-124 (GHL). Position 227 is an N6-(pyridoxal phosphate)lysine (Lys-227). Residue 351-353 (SPF) participates in (6S)-5,6,7,8-tetrahydrofolate binding.

The protein belongs to the SHMT family. In terms of assembly, homodimer. Pyridoxal 5'-phosphate is required as a cofactor.

It localises to the cytoplasm. It carries out the reaction (6R)-5,10-methylene-5,6,7,8-tetrahydrofolate + glycine + H2O = (6S)-5,6,7,8-tetrahydrofolate + L-serine. The protein operates within one-carbon metabolism; tetrahydrofolate interconversion. Its pathway is amino-acid biosynthesis; glycine biosynthesis; glycine from L-serine: step 1/1. Its function is as follows. Catalyzes the reversible interconversion of serine and glycine with tetrahydrofolate (THF) serving as the one-carbon carrier. This reaction serves as the major source of one-carbon groups required for the biosynthesis of purines, thymidylate, methionine, and other important biomolecules. Also exhibits THF-independent aldolase activity toward beta-hydroxyamino acids, producing glycine and aldehydes, via a retro-aldol mechanism. The chain is Serine hydroxymethyltransferase from Pseudothermotoga lettingae (strain ATCC BAA-301 / DSM 14385 / NBRC 107922 / TMO) (Thermotoga lettingae).